A 107-amino-acid chain; its full sequence is Phosphoribosyl-ATP pyrophosphatase (107 aa).

This sequence belongs to the PRA-PH family.

It localises to the cytoplasm. The catalysed reaction is 1-(5-phospho-beta-D-ribosyl)-ATP + H2O = 1-(5-phospho-beta-D-ribosyl)-5'-AMP + diphosphate + H(+). It participates in amino-acid biosynthesis; L-histidine biosynthesis; L-histidine from 5-phospho-alpha-D-ribose 1-diphosphate: step 2/9. The polypeptide is Phosphoribosyl-ATP pyrophosphatase (Rhizobium johnstonii (strain DSM 114642 / LMG 32736 / 3841) (Rhizobium leguminosarum bv. viciae)).